Here is a 198-residue protein sequence, read N- to C-terminus: LexA repressor (198 aa).

The segment at residues 28–47 is a DNA-binding region (H-T-H motif); that stretch reads IRDIAKHFKLTPRGAHIHVL. Residues Ser-120 and Lys-157 each act as for autocatalytic cleavage activity in the active site.

The protein belongs to the peptidase S24 family. Homodimer.

It carries out the reaction Hydrolysis of Ala-|-Gly bond in repressor LexA.. Functionally, represses a number of genes involved in the response to DNA damage (SOS response), including recA and lexA. In the presence of single-stranded DNA, RecA interacts with LexA causing an autocatalytic cleavage which disrupts the DNA-binding part of LexA, leading to derepression of the SOS regulon and eventually DNA repair. This Thermosipho africanus (strain TCF52B) protein is LexA repressor.